Here is an 837-residue protein sequence, read N- to C-terminus: Putative dimethyl sulfoxide reductase catalytic subunit A (837 aa).

The segment at residues M1–A36 is a signal peptide (tat-type signal). Residues D53 to D110 form the 4Fe-4S Mo/W bis-MGD-type domain. Positions 60, 64, 68, and 96 each coordinate [4Fe-4S] cluster. N200 lines the Mo-bis(molybdopterin guanine dinucleotide) pocket. The interval E813–S837 is disordered. The segment covering G826 to S837 has biased composition (low complexity).

Belongs to the prokaryotic molybdopterin-containing oxidoreductase family. Probable multiprotein complex that likely consists of DmsA, DmsB and DmsC. Requires Mo-bis(molybdopterin guanine dinucleotide) as cofactor. It depends on [4Fe-4S] cluster as a cofactor. Predicted to be exported by the Tat system. The position of the signal peptide cleavage has not been experimentally proven.

The protein resides in the cell membrane. It catalyses the reaction dimethyl sulfide + a menaquinone + H2O = dimethyl sulfoxide + a menaquinol. Dimethyl sulfoxide (DMSO) reductase catalyzes the reduction of dimethyl sulfoxide (DMSO) to dimethyl sulfide (DMS) during anaerobic respiration; it can also use trimethylamine N-oxide (TMAO) as terminal electron acceptor. Required for anaerobic respiration on DMSO and TMAO; subunit A is proposed to be catalytically active. This is Putative dimethyl sulfoxide reductase catalytic subunit A (dmsA) from Halobacterium salinarum (strain ATCC 700922 / JCM 11081 / NRC-1) (Halobacterium halobium).